The primary structure comprises 330 residues: Mucin-15 (330 aa).

The first 23 residues, M1–G23, serve as a signal peptide directing secretion. Residues G23 to F115 form a disordered region. Over E24–T232 the chain is Extracellular. Residues N30, N44, N54, N71, N79, N89, N94, N122, N138, N147, N154, N162, N175, N214, and N221 are each glycosylated (N-linked (GlcNAc...) asparagine). Over residues M42 to T56 the composition is skewed to polar residues. Over residues F86–F115 the composition is skewed to polar residues. The disordered stretch occupies residues S164–E185. A helical membrane pass occupies residues G233–G253. The Cytoplasmic segment spans residues Y254–V330. Residues L279 to V330 are disordered. Over residues F292–G310 the composition is skewed to polar residues.

Post-translationally, highly glycosylated (N- and O-linked carbohydrates). Mainly expressed on apical surfaces of the mammary epithelial cells.

It localises to the cell membrane. It is found in the secreted. In Bos taurus (Bovine), this protein is Mucin-15 (MUC15).